The primary structure comprises 266 residues: Zinc transporter ZupT (266 aa).

The next 8 helical transmembrane spans lie at 8 to 28, 35 to 55, 70 to 90, 123 to 143, 152 to 172, 185 to 205, 209 to 229, and 246 to 266; these read LLLT…ALVV, FLTL…FVEL, QAAA…IWAI, GLFT…AVFF, GIVI…AIAV, FTYS…GFAI, WLSP…MVYI, and LAIS…LLLA. Residues Asn-134 and Glu-137 each contribute to the Fe(2+) site. Zn(2+) is bound by residues Glu-137 and His-162. 3 residues coordinate Fe(2+): Asn-163, Glu-166, and Glu-195. Glu-166 lines the Zn(2+) pocket.

The protein belongs to the ZIP transporter (TC 2.A.5) family. ZupT subfamily.

It is found in the cell membrane. It catalyses the reaction Zn(2+)(in) = Zn(2+)(out). In terms of biological role, mediates zinc uptake. May also transport other divalent cations. The sequence is that of Zinc transporter ZupT from Chlorobium phaeovibrioides (strain DSM 265 / 1930) (Prosthecochloris vibrioformis (strain DSM 265)).